The sequence spans 159 residues: Phosphopantetheine adenylyltransferase (159 aa).

Ser8 serves as a coordination point for substrate. Residues 8-9 and His16 each bind ATP; that span reads SF. Lys40, Thr72, and Arg86 together coordinate substrate. ATP contacts are provided by residues 87–89, Glu97, and 122–128; these read GLR and HSFVSSS.

Belongs to the bacterial CoaD family. Homohexamer. It depends on Mg(2+) as a cofactor.

It is found in the cytoplasm. It catalyses the reaction (R)-4'-phosphopantetheine + ATP + H(+) = 3'-dephospho-CoA + diphosphate. Its pathway is cofactor biosynthesis; coenzyme A biosynthesis; CoA from (R)-pantothenate: step 4/5. Reversibly transfers an adenylyl group from ATP to 4'-phosphopantetheine, yielding dephospho-CoA (dPCoA) and pyrophosphate. The protein is Phosphopantetheine adenylyltransferase of Synechococcus sp. (strain JA-2-3B'a(2-13)) (Cyanobacteria bacterium Yellowstone B-Prime).